The chain runs to 64 residues: Large ribosomal subunit protein bL35 (64 aa).

This sequence belongs to the bacterial ribosomal protein bL35 family.

The polypeptide is Large ribosomal subunit protein bL35 (Levilactobacillus brevis (strain ATCC 367 / BCRC 12310 / CIP 105137 / JCM 1170 / LMG 11437 / NCIMB 947 / NCTC 947) (Lactobacillus brevis)).